The following is a 339-amino-acid chain: Thermospermine synthase ACAULIS5 (339 aa).

A PABS domain is found at 33-270 (CHWYEETIDD…DTWGWVMASD (238 aa)). Residues Gln-62, Glu-117, Asp-137, and 168 to 169 (DA) contribute to the S-adenosyl 3-(methylsulfanyl)propylamine site. The active-site Proton acceptor is the Asp-186.

This sequence belongs to the spermidine/spermine synthase family. Highly expressed in stem internodes and roots. Lower levels in young seedlings before flowering and rosette leaves. Expressed in the vascular tissues. Restricted to procambial and/or provascular cells during primary root development and early leaves development.

The catalysed reaction is S-adenosyl 3-(methylsulfanyl)propylamine + spermidine = thermospermine + S-methyl-5'-thioadenosine + H(+). Its function is as follows. Required for correct xylem specification through regulation of the lifetime of the xylem elements. Prevents premature death of the xylem vessel elements. This chain is Thermospermine synthase ACAULIS5 (ACL5), found in Arabidopsis thaliana (Mouse-ear cress).